Here is a 62-residue protein sequence, read N- to C-terminus: Large ribosomal subunit protein uL29 (62 aa).

Belongs to the universal ribosomal protein uL29 family.

In Laribacter hongkongensis (strain HLHK9), this protein is Large ribosomal subunit protein uL29.